A 917-amino-acid polypeptide reads, in one-letter code: Protein translocase subunit SecA (917 aa).

ATP contacts are provided by residues Gln-87, 105 to 109, and Asp-513; that span reads GEGKT. A disordered region spans residues 834–917; that stretch reads EEQMNEMEKR…YKSCHGKLTG (84 aa). Residues 839-852 show a composition bias toward basic and acidic residues; the sequence is EMEKRRQEEAERQR. The span at 862 to 876 shows a compositional bias: low complexity; that stretch reads APSQLAAPATPATPE. Positions 900, 902, 911, and 912 each coordinate Zn(2+).

The protein belongs to the SecA family. In terms of assembly, monomer and homodimer. Part of the essential Sec protein translocation apparatus which comprises SecA, SecYEG and auxiliary proteins SecDF-YajC and YidC. It depends on Zn(2+) as a cofactor.

It localises to the cell inner membrane. It is found in the cytoplasm. It carries out the reaction ATP + H2O + cellular proteinSide 1 = ADP + phosphate + cellular proteinSide 2.. Part of the Sec protein translocase complex. Interacts with the SecYEG preprotein conducting channel. Has a central role in coupling the hydrolysis of ATP to the transfer of proteins into and across the cell membrane, serving both as a receptor for the preprotein-SecB complex and as an ATP-driven molecular motor driving the stepwise translocation of polypeptide chains across the membrane. This Saccharophagus degradans (strain 2-40 / ATCC 43961 / DSM 17024) protein is Protein translocase subunit SecA.